The sequence spans 61 residues: Sec-independent protein translocase protein TatA (61 aa).

The chain crosses the membrane as a helical span at residues 1-21 (MFSNIGFPGLILILVAVLILF).

It belongs to the TatA/E family. As to quaternary structure, forms a complex with TatC.

It localises to the cell membrane. Its function is as follows. Part of the twin-arginine translocation (Tat) system that transports large folded proteins containing a characteristic twin-arginine motif in their signal peptide across membranes. TatA could form the protein-conducting channel of the Tat system. This is Sec-independent protein translocase protein TatA from Bacillus anthracis (strain A0248).